We begin with the raw amino-acid sequence, 445 residues long: Tubulin beta-1 chain (445 aa).

GTP contacts are provided by glutamine 11, glutamate 69, serine 138, glycine 142, threonine 143, glycine 144, asparagine 204, and asparagine 226. Residue glutamate 69 participates in Mg(2+) binding. The disordered stretch occupies residues 422-445 (QYQDAGMDDEYGEEYEDEAPAEEE). Residues 427 to 445 (GMDDEYGEEYEDEAPAEEE) show a composition bias toward acidic residues.

This sequence belongs to the tubulin family. As to quaternary structure, dimer of alpha and beta chains. A typical microtubule is a hollow water-filled tube with an outer diameter of 25 nm and an inner diameter of 15 nM. Alpha-beta heterodimers associate head-to-tail to form protofilaments running lengthwise along the microtubule wall with the beta-tubulin subunit facing the microtubule plus end conferring a structural polarity. Microtubules usually have 13 protofilaments but different protofilament numbers can be found in some organisms and specialized cells. Mg(2+) is required as a cofactor.

It localises to the cytoplasm. It is found in the cytoskeleton. Tubulin is the major constituent of microtubules, a cylinder consisting of laterally associated linear protofilaments composed of alpha- and beta-tubulin heterodimers. Microtubules grow by the addition of GTP-tubulin dimers to the microtubule end, where a stabilizing cap forms. Below the cap, tubulin dimers are in GDP-bound state, owing to GTPase activity of alpha-tubulin. The polypeptide is Tubulin beta-1 chain (TUB1) (Colletotrichum graminicola (Maize anthracnose fungus)).